A 317-amino-acid chain; its full sequence is Carbonic anhydrase 6 (317 aa).

The first 17 residues, 1–17 (MRALVSVVSLFFLGIQA), serve as a signal peptide directing secretion. Positions 19–277 (SDWSYSGDDG…NNHRVVEANF (259 aa)) constitute an Alpha-carbonic anhydrase domain. The cysteines at positions 41 and 223 are disulfide-linked. The active-site Proton donor/acceptor is the His-84. The Zn(2+) site is built by His-110, His-112, and His-137. Residue 219–220 (TT) coordinates substrate. N-linked (GlcNAc...) asparagine glycosylation occurs at Asn-255.

This sequence belongs to the alpha-carbonic anhydrase family. The cofactor is Zn(2+). In terms of tissue distribution, major constituent of saliva.

The protein localises to the secreted. It carries out the reaction hydrogencarbonate + H(+) = CO2 + H2O. Reversible hydration of carbon dioxide. Its role in saliva is unknown. This Mus musculus (Mouse) protein is Carbonic anhydrase 6 (Ca6).